A 333-amino-acid chain; its full sequence is tRNA (guanine(37)-N(1))/4-demethylwyosine(37)-methyltransferase Taw22 (333 aa).

Residues Arg174, Phe191, 213 to 214, and 243 to 244 each bind S-adenosyl-L-methionine; these read EI and DV.

The protein belongs to the class I-like SAM-binding methyltransferase superfamily. TRM5/TYW2 family.

The protein localises to the cytoplasm. The catalysed reaction is guanosine(37) in tRNA + S-adenosyl-L-methionine = N(1)-methylguanosine(37) in tRNA + S-adenosyl-L-homocysteine + H(+). It catalyses the reaction 4-demethylwyosine(37) in tRNA(Phe) + S-adenosyl-L-methionine = isowyosine(37) in tRNA(Phe) + S-adenosyl-L-homocysteine + H(+). Catalyzes both the N1-methylation of guanosine and the C7-methylation of 4-demethylwyosine (imG-14) at position 37 in tRNA(Phe). This is tRNA (guanine(37)-N(1))/4-demethylwyosine(37)-methyltransferase Taw22 from Pyrococcus abyssi (strain GE5 / Orsay).